Here is a 166-residue protein sequence, read N- to C-terminus: Large ribosomal subunit protein uL10 (166 aa).

The protein belongs to the universal ribosomal protein uL10 family. In terms of assembly, part of the ribosomal stalk of the 50S ribosomal subunit. The N-terminus interacts with L11 and the large rRNA to form the base of the stalk. The C-terminus forms an elongated spine to which L12 dimers bind in a sequential fashion forming a multimeric L10(L12)X complex.

In terms of biological role, forms part of the ribosomal stalk, playing a central role in the interaction of the ribosome with GTP-bound translation factors. The polypeptide is Large ribosomal subunit protein uL10 (Shewanella amazonensis (strain ATCC BAA-1098 / SB2B)).